The chain runs to 419 residues: Voltage-gated potassium channel subunit beta-1 (419 aa).

A disordered region spans residues 1–52 (MLAARTGAAGSQISEENTKLRRQSGFSVAGKDKSPKKASENAKDSSLSPSGE). The segment covering 30–43 (GKDKSPKKASENAK) has biased composition (basic and acidic residues). The NADP(+) site is built by T108, W109, Q115, and D137. Residue Y142 is the Proton donor/acceptor of the active site. Residues N210, S240, R241, Q266, W295, S296, P297, L298, A299, C300, K306, R316, G375, S377, Q381, E384, and N385 each coordinate NADP(+).

Belongs to the shaker potassium channel beta subunit family. As to quaternary structure, homotetramer. Interaction with tetrameric potassium channel alpha subunits gives rise to a heterooctamer. Identified in potassium channel complexes containing KCNA1, KCNA2, KCNA4, KCNA5, KCNA6, KCNAB1 and KCNAB2. Part of a complex containing KCNA1, KCNA4 and LGI1; interaction with LGI1 inhibits down-regulation of KCNA1 channel activity. Interacts with the dimer formed by GNB1 and GNG2; this enhances KCNA1 binding. Interacts with SQSTM1. In brain, expression is most prominent in caudate nucleus, hippocampus and thalamus. Significant expression also detected in amygdala and subthalamic nucleus. Also expressed in both healthy and cardiomyopathic heart. Up to four times more abundant in left ventricle than left atrium.

The protein resides in the cytoplasm. It localises to the membrane. It is found in the cell membrane. It catalyses the reaction a primary alcohol + NADP(+) = an aldehyde + NADPH + H(+). The catalysed reaction is a secondary alcohol + NADP(+) = a ketone + NADPH + H(+). Its function is as follows. Regulatory subunit of the voltage-gated potassium (Kv) Shaker channels composed of pore-forming and potassium-conducting alpha subunits and of regulatory beta subunits. The beta-1/KCNAB1 cytoplasmic subunit mediates closure of delayed rectifier potassium channels by physically obstructing the pore via its N-terminal domain and increases the speed of channel closure for other family members. Promotes the inactivation of Kv1.1/KCNA1, Kv1.2/KCNA2, Kv1.4/KCNA4, Kv1.5/KCNA5 and Kv1.6/KCNA6 alpha subunit-containing channels. Displays nicotinamide adenine dinucleotide phosphate (NADPH)-dependent aldoketoreductase activity by catalyzing the NADPH-dependent reduction of a variety of endogenous aldehydes and ketones. The binding of NADPH is required for efficient down-regulation of potassium channel activity. Oxidation of the bound NADPH restrains N-terminal domain from blocking the channel, thereby decreasing N-type inactivation of potassium channel activity. In terms of biological role, isoform KvB1.2 shows no effect on KCNA1, KCNA2 or KCNB1. This is Voltage-gated potassium channel subunit beta-1 from Homo sapiens (Human).